Consider the following 173-residue polypeptide: Crossover junction endodeoxyribonuclease RuvC (173 aa).

Catalysis depends on residues Asp-8, Glu-69, and Asp-141. Residues Asp-8, Glu-69, and Asp-141 each contribute to the Mg(2+) site.

It belongs to the RuvC family. In terms of assembly, homodimer which binds Holliday junction (HJ) DNA. The HJ becomes 2-fold symmetrical on binding to RuvC with unstacked arms; it has a different conformation from HJ DNA in complex with RuvA. In the full resolvosome a probable DNA-RuvA(4)-RuvB(12)-RuvC(2) complex forms which resolves the HJ. Mg(2+) serves as cofactor.

It localises to the cytoplasm. The catalysed reaction is Endonucleolytic cleavage at a junction such as a reciprocal single-stranded crossover between two homologous DNA duplexes (Holliday junction).. The RuvA-RuvB-RuvC complex processes Holliday junction (HJ) DNA during genetic recombination and DNA repair. Endonuclease that resolves HJ intermediates. Cleaves cruciform DNA by making single-stranded nicks across the HJ at symmetrical positions within the homologous arms, yielding a 5'-phosphate and a 3'-hydroxyl group; requires a central core of homology in the junction. The consensus cleavage sequence is 5'-(A/T)TT(C/G)-3'. Cleavage occurs on the 3'-side of the TT dinucleotide at the point of strand exchange. HJ branch migration catalyzed by RuvA-RuvB allows RuvC to scan DNA until it finds its consensus sequence, where it cleaves and resolves the cruciform DNA. This Xylella fastidiosa (strain 9a5c) protein is Crossover junction endodeoxyribonuclease RuvC.